Here is a 329-residue protein sequence, read N- to C-terminus: Src kinase-associated phosphoprotein 2 (329 aa).

The segment at 58–95 (YAEDSEEEEDWDSNEGGSLQSERTDKDEEACEGAQQAP) is disordered. Positions 61 to 70 (DSEEEEDWDS) are enriched in acidic residues. Residues 104-207 (SVFKAGYLEK…WVKQIDFVLK (104 aa)) form the PH domain. Positions 240-263 (EDMPSPPPKVEPVSKHPPPTPAVD) are disordered. The span at 243-260 (PSPPPKVEPVSKHPPPTP) shows a compositional bias: pro residues. Residues 267-328 (DYANYYQGLW…PKDYLMELYA (62 aa)) enclose the SH3 domain.

This sequence belongs to the SKAP family. In terms of processing, phosphorylated on tyrosines.

The protein localises to the cytoplasm. In terms of biological role, may be involved in B-cell and macrophage adhesion processes. May play a role in src signaling pathway. This is Src kinase-associated phosphoprotein 2 (skap2) from Takifugu rubripes (Japanese pufferfish).